Reading from the N-terminus, the 420-residue chain is UDP-N-acetylglucosamine 1-carboxyvinyltransferase (420 aa).

A phosphoenolpyruvate-binding site is contributed by 22–23 (KN). UDP-N-acetyl-alpha-D-glucosamine is bound at residue arginine 94. Residue cysteine 118 is the Proton donor of the active site. 2-(S-cysteinyl)pyruvic acid O-phosphothioketal is present on cysteine 118. 2 residues coordinate UDP-N-acetyl-alpha-D-glucosamine: aspartate 307 and isoleucine 329.

The protein belongs to the EPSP synthase family. MurA subfamily.

The protein localises to the cytoplasm. The enzyme catalyses phosphoenolpyruvate + UDP-N-acetyl-alpha-D-glucosamine = UDP-N-acetyl-3-O-(1-carboxyvinyl)-alpha-D-glucosamine + phosphate. It functions in the pathway cell wall biogenesis; peptidoglycan biosynthesis. Functionally, cell wall formation. Adds enolpyruvyl to UDP-N-acetylglucosamine. The chain is UDP-N-acetylglucosamine 1-carboxyvinyltransferase from Gluconacetobacter diazotrophicus (strain ATCC 49037 / DSM 5601 / CCUG 37298 / CIP 103539 / LMG 7603 / PAl5).